Reading from the N-terminus, the 1132-residue chain is MGMACLTMTEMEGTSTSPAHQNGDIPGNANSVKQTEPVLQVYLYHSLGQAEGDYLKFPNGEYVAEEICVAASKACGITPVYHNMFALMSETERIWYPPNHVFHIDESTRHNILYRIRFYFPHWYCSGSNRTYRYGVSRGAEAPLLDDFVMSYLFAQWRHDFVHGWIKVPVTHETQEECLGMAVLDMMRIAKEKDQTPLAVYNSISYKTFLPKCVRAKIQDYHILTRKRIRYRFRRFIQQFSQCKATARNLKLKYLINLETLQSAFYTEQFEVKESARGPSGEEIFATIIITGNGGIQWSRGKHKESETLTEQDLQLYCDFPDIIDVSIKQANQECSTESRVVTVHKQDGKVLEIELSSLKEALSFVSLIDGYYRLTADAHHYLCKEVAPPAVLENIHSNCHGPISMDFAISKLKKAGNQTGLYVLRCSPKDFNKYFLTFAVERENVIEYKHCLITKNENGEYNLSGTKRNFSSLKDLLNCYQMETVRSDSIIFQFTKCCPPKPKDKSNLLVFRTNGVSDVQLSPTLQRHNNVNQMVFHKIRNEDLIFNESLGQGTFTKIFKGVRREVGDYGQLHETEVLLKVLDKAHRNYSESFFEAASMMSQLSHKHLVLNYGVCVCGEENILVQEFVKFGSLDTYLKKNKNSINILWKLGVAKQLAWAMHFLEEKSLIHGNVCAKNILLIREEDRKTGNPPFIKLSDPGISITVLPKDILQERIPWVPPECIENPKNLTLATDKWSFGTTLWEICSGGDKPLSALDSQRKLQFYEDKHQLPAPKWTELANLINTCMDYEPDFRPAFRAVIRDLNSLFTPDYELLTENDMLPNMRIGALGFSGAFEDRDPTQFEERHLKFLQQLGKGNFGSVEMCRYDPLQDNTGEVVAVKKLQHSTEEHLRDFEREIEILKSLQHDNIVKYKGVCYSAGRRNLRLIMEYLPYGSLRDYLQKHKERIDHKKLLQYTSQICKGMEYLGTKRYIHRDLATRNILVENENRVKIGDFGLTKVLPQDKEYYKVKEPGESPIFWYAPESLTESKFSVASDVWSFGVVLYELFTYIEKSKSPPVEFMRMIGNDKQGQMIVFHLIELLKNNGRLPRPEGCPDEIYVIMTECWNNNVNQRPSFRDLSLRVDQIRDSMAA.

Residues 1-239 (MGMACLTMTE…RYRFRRFIQQ (239 aa)) form an interaction with cytokine/interferon/growth hormone receptors region. The region spanning 37–380 (PVLQVYLYHS…GYYRLTADAH (344 aa)) is the FERM domain. Phosphotyrosine; by autocatalysis is present on Tyr119. A phosphotyrosine mark is found at Tyr372 and Tyr373. The region spanning 401–482 (HGPISMDFAI…SLKDLLNCYQ (82 aa)) is the SH2; atypical domain. The residue at position 523 (Ser523) is a Phosphoserine. One can recognise a Protein kinase 1 domain in the interval 545–809 (LIFNESLGQG…AVIRDLNSLF (265 aa)). Residues Tyr570 and Tyr813 each carry the phosphotyrosine modification. Residues 849 to 1126 (LKFLQQLGKG…RDLSLRVDQI (278 aa)) form the Protein kinase 2 domain. 855-863 (LGKGNFGSV) contacts ATP. A Phosphotyrosine; by autocatalysis modification is found at Tyr868. ATP is bound at residue Lys882. Phosphotyrosine; by autocatalysis occurs at positions 966 and 972. The active-site Proton acceptor is the Asp976. Phosphotyrosine; by autocatalysis occurs at positions 1007 and 1008.

This sequence belongs to the protein kinase superfamily. Tyr protein kinase family. JAK subfamily. In terms of assembly, interacts with IL23R, SKB1 and STAM2. Interacts with EPOR. Interacts with LYN. Interacts with SIRPA. Interacts with SH2B1. Interacts with TEC. Interacts with IFNGR2 (via intracellular domain). Interacts with LEPR (Isoform B). Interacts with HSP90AB1; promotes functional activation in a heat shock-dependent manner. Interacts with STRA6. Interacts with ASB2; the interaction targets JAK2 for Notch-induced proteasomal degradation. It depends on Mg(2+) as a cofactor. Autophosphorylated, leading to regulate its activity. Leptin promotes phosphorylation on tyrosine residues, including phosphorylation on Tyr-813. Autophosphorylation on Tyr-119 in response to EPO down-regulates its kinase activity. Autophosphorylation on Tyr-868, Tyr-966 and Tyr-972 in response to growth hormone (GH) are required for maximal kinase activity. Also phosphorylated by TEC. Phosphorylated on tyrosine residues in response to interferon gamma signaling. Phosphorylated on tyrosine residues in response to a signaling cascade that is activated by increased cellular retinol. Post-translationally, undergoes Notch-induced ubiquitination and subsequent proteasomal degradation which is mediated by ASB1 or ASB2, the substrate-recognition components of probable ECS E3 ubiquitin-protein ligase complexes. Ubiquitously expressed throughout most tissues.

Its subcellular location is the endomembrane system. The protein localises to the cytoplasm. The protein resides in the nucleus. The catalysed reaction is L-tyrosyl-[protein] + ATP = O-phospho-L-tyrosyl-[protein] + ADP + H(+). Regulated by autophosphorylation, can both activate or decrease activity. Heme regulates its activity by enhancing the phosphorylation on Tyr-1007 and Tyr-1008. In terms of biological role, non-receptor tyrosine kinase involved in various processes such as cell growth, development, differentiation or histone modifications. Mediates essential signaling events in both innate and adaptive immunity. In the cytoplasm, plays a pivotal role in signal transduction via its association with type I receptors such as growth hormone (GHR), prolactin (PRLR), leptin (LEPR), erythropoietin (EPOR), thrombopoietin (THPO); or type II receptors including IFN-alpha, IFN-beta, IFN-gamma and multiple interleukins. Following ligand-binding to cell surface receptors, phosphorylates specific tyrosine residues on the cytoplasmic tails of the receptor, creating docking sites for STATs proteins. Subsequently, phosphorylates the STATs proteins once they are recruited to the receptor. Phosphorylated STATs then form homodimer or heterodimers and translocate to the nucleus to activate gene transcription. For example, cell stimulation with erythropoietin (EPO) during erythropoiesis leads to JAK2 autophosphorylation, activation, and its association with erythropoietin receptor (EPOR) that becomes phosphorylated in its cytoplasmic domain. Then, STAT5 (STAT5A or STAT5B) is recruited, phosphorylated and activated by JAK2. Once activated, dimerized STAT5 translocates into the nucleus and promotes the transcription of several essential genes involved in the modulation of erythropoiesis. Part of a signaling cascade that is activated by increased cellular retinol and that leads to the activation of STAT5 (STAT5A or STAT5B). In addition, JAK2 mediates angiotensin-2-induced ARHGEF1 phosphorylation. Plays a role in cell cycle by phosphorylating CDKN1B. Cooperates with TEC through reciprocal phosphorylation to mediate cytokine-driven activation of FOS transcription. In the nucleus, plays a key role in chromatin by specifically mediating phosphorylation of 'Tyr-41' of histone H3 (H3Y41ph), a specific tag that promotes exclusion of CBX5 (HP1 alpha) from chromatin. Up-regulates the potassium voltage-gated channel activity of KCNA3. The polypeptide is Tyrosine-protein kinase JAK2 (Rattus norvegicus (Rat)).